A 293-amino-acid polypeptide reads, in one-letter code: Fructose-bisphosphate aldolase (293 aa).

Ser-50 serves as a coordination point for D-glyceraldehyde 3-phosphate. Asp-85 acts as the Proton donor in catalysis. His-86, Asp-106, Glu-136, and His-178 together coordinate Zn(2+). Gly-179 lines the dihydroxyacetone phosphate pocket. His-208 lines the Zn(2+) pocket. Dihydroxyacetone phosphate-binding positions include 209–211 (GGS) and 230–233 (NVNT).

This sequence belongs to the class II fructose-bisphosphate aldolase family. Zn(2+) serves as cofactor.

The enzyme catalyses beta-D-fructose 1,6-bisphosphate = D-glyceraldehyde 3-phosphate + dihydroxyacetone phosphate. The protein operates within carbohydrate degradation; glycolysis; D-glyceraldehyde 3-phosphate and glycerone phosphate from D-glucose: step 4/4. Functionally, catalyzes the aldol condensation of dihydroxyacetone phosphate (DHAP or glycerone-phosphate) with glyceraldehyde 3-phosphate (G3P) to form fructose 1,6-bisphosphate (FBP) in gluconeogenesis and the reverse reaction in glycolysis. This chain is Fructose-bisphosphate aldolase (fba), found in Streptococcus pyogenes serotype M3 (strain ATCC BAA-595 / MGAS315).